The following is a 415-amino-acid chain: Probable tRNA pseudouridine synthase D (415 aa).

Residue D83 is the Nucleophile of the active site. The TRUD domain occupies 158-378 (GFPNYFGYQR…PGRRRELLIR (221 aa)).

This sequence belongs to the pseudouridine synthase TruD family.

It catalyses the reaction uridine(13) in tRNA = pseudouridine(13) in tRNA. Its function is as follows. Could be responsible for synthesis of pseudouridine from uracil-13 in transfer RNAs. This is Probable tRNA pseudouridine synthase D from Thermococcus gammatolerans (strain DSM 15229 / JCM 11827 / EJ3).